The sequence spans 363 residues: Nicotinamide adenine dinucleotide transporter 2, mitochondrial (363 aa).

Solcar repeat units follow at residues 15–107, 115–203, and 215–305; these read REVA…LKDV, LSIG…IKQY, and LSPG…MLRF. A run of 6 helical transmembrane segments spans residues 21 to 41, 82 to 102, 121 to 141, 176 to 196, 215 to 235, and 277 to 299; these read AGAG…LDVI, GLSP…SVYG, MIAA…LWVV, LYSG…QFPA, LSPG…SILT, and LYRG…FTTY. The segment at 313–363 is disordered; that stretch reads ETNRSDDRRREEERKNLVSRRGEEEDKDLGLRESQTQSNKISTPHIPLGSK. Over residues 315 to 343 the composition is skewed to basic and acidic residues; sequence NRSDDRRREEERKNLVSRRGEEEDKDLGL. A compositionally biased stretch (polar residues) spans 345–354; the sequence is ESQTQSNKIS.

This sequence belongs to the mitochondrial carrier (TC 2.A.29) family. As to expression, highly expressed in young meristematic shoot area, vascular bundles of leaves, developing siliques including the funiculi, petal veins, developing pollen and central cylinder of roots.

The protein localises to the mitochondrion membrane. Its activity is regulated as follows. Inhibited by pyridoxal 5'-phosphate, bathophenanthroline, tannic acid, mersalyl, mercuric chloride, p-hydroxymercuribenzoate, p-hydroxymercuribenzoate sulfonate, bromocresol purple and N-ethylmaleimide. Mediates the NAD(+) import into chloroplast. Favors the NAD(+)(in)/ADP or AMP(out) antiport exchange, but is also able to catalyze a low unidirectional transport (uniport) of NAD(+). Transports NAD(+), nicotinic acid adenine dinucleotide, nicotinamide mononucleotide, nicotinic acid mononucleotide, FAD, FMN, TTP, TDP, TMP, UTP, UDP, UMP, CTP, CDP, CMP, GTP, GDP, GMP, 3'-AMP, ATP, ADP and AMP, has low transport activity with cAMP, NADH and alpha-NAD(+), and has no activity with NADP(+), NADPH, nicotinamide, nicotinic acid, adenosine, thiamine mono- or diphosphate, inorganic phosphate, CoA, folate, NaCl, malate, malonate, citrate, fumarate, aspartate, glutamate, S-adenosylmethionine, lysine, arginine, and ornithine. The protein is Nicotinamide adenine dinucleotide transporter 2, mitochondrial (NDT2) of Arabidopsis thaliana (Mouse-ear cress).